Reading from the N-terminus, the 322-residue chain is Quinolinate synthase (322 aa).

Residues His-37 and Ser-54 each coordinate iminosuccinate. [4Fe-4S] cluster is bound at residue Cys-99. Iminosuccinate is bound by residues 125 to 127 (YIN) and Ser-142. Cys-185 is a [4Fe-4S] cluster binding site. Iminosuccinate contacts are provided by residues 211-213 (HPE) and Thr-228. Cys-278 contributes to the [4Fe-4S] cluster binding site.

The protein belongs to the quinolinate synthase family. Type 2 subfamily. [4Fe-4S] cluster is required as a cofactor.

It localises to the cytoplasm. It carries out the reaction iminosuccinate + dihydroxyacetone phosphate = quinolinate + phosphate + 2 H2O + H(+). The protein operates within cofactor biosynthesis; NAD(+) biosynthesis; quinolinate from iminoaspartate: step 1/1. Catalyzes the condensation of iminoaspartate with dihydroxyacetone phosphate to form quinolinate. This is Quinolinate synthase from Chlorobaculum parvum (strain DSM 263 / NCIMB 8327) (Chlorobium vibrioforme subsp. thiosulfatophilum).